The following is a 62-amino-acid chain: MRKLKMMLCVMMLPLVVVGCTSKQSVSQCVKPRLPPAWIMQPPPDFTWQTPLNGIISPSERG.

An N-terminal signal peptide occupies residues 1 to 19 (MRKLKMMLCVMMLPLVVVG). A lipid anchor (N-palmitoyl cysteine; by host) is attached at cysteine 20. Cysteine 20 is lipidated: S-diacylglycerol cysteine; by host. Residues 20–62 (CTSKQSVSQCVKPRLPPAWIMQPPPDFTWQTPLNGIISPSERG) lie on the Periplasmic side of the membrane. The tract at residues 32 to 44 (PRLPPAWIMQPPP) is proline-rich.

It belongs to the Lambdavirus o-spanin family. Homodimer; disulfide-linked. Interacts (via C-terminus) with the spanin inner membrane subunit (via C-terminus). Part of the spanin complex which spans the entire periplasmic space. The spanin complex is composed of one homodimer of the i-spanin linked by intermolecular disulfide bonds involving two Cys residues and one homodimer of the o-spanin covalently linked by an intermolecular disulfide bond involving one Cys.

The protein resides in the host cell outer membrane. Component of the spanin complex that disrupts the host outer membrane and participates in cell lysis during virus exit. The spanin complex conducts the final step in host lysis by disrupting the outer membrane after holin and endolysin action have permeabilized the inner membrane and degraded the host peptidoglycans. Host outer membrane disruption is due to local fusion between the inner and outer membrane performed by the spanin complex. The protein is Spanin, outer lipoprotein subunit (Rz1) of Escherichia coli (Bacteriophage 21).